We begin with the raw amino-acid sequence, 366 residues long: NADP-dependent oxidoreductase domain-containing protein 1 (366 aa).

Belongs to the pyrroline-5-carboxylate reductase family.

Functionally, probable oxidoreductase. The polypeptide is NADP-dependent oxidoreductase domain-containing protein 1 (Noxred1) (Mus musculus (Mouse)).